The sequence spans 158 residues: NAD(P)H-quinone oxidoreductase subunit O, chloroplastic (158 aa).

The N-terminal 38 residues, 1 to 38 (MAFSATVSQLSSLSTISSSLPISSRRLPHRSLPQFTVK), are a transit peptide targeting the chloroplast. The disordered stretch occupies residues 33–70 (PQFTVKAEAEKEKQSTQGKSDGEASPAATKTPKTLPKK). Over residues 56-70 (ASPAATKTPKTLPKK) the composition is skewed to low complexity.

The protein belongs to the NDH complex subunit O family. In terms of assembly, part of the chloroplast NDH complex, composed of a mixture of chloroplast and nucleus encoded subunits. Component of the NDH subcomplex A, at least composed of ndhH, ndhI, ndhJ, ndhK, ndhL, ndhM, ndhN and ndhO.

The protein resides in the plastid. Its subcellular location is the chloroplast thylakoid membrane. The catalysed reaction is a plastoquinone + NADH + (n+1) H(+)(in) = a plastoquinol + NAD(+) + n H(+)(out). The enzyme catalyses a plastoquinone + NADPH + (n+1) H(+)(in) = a plastoquinol + NADP(+) + n H(+)(out). Its function is as follows. NDH shuttles electrons from NAD(P)H:plastoquinone, via FMN and iron-sulfur (Fe-S) centers, to quinones in the photosynthetic chain and possibly in a chloroplast respiratory chain. The immediate electron acceptor for the enzyme in this species is believed to be plastoquinone. Couples the redox reaction to proton translocation, and thus conserves the redox energy in a proton gradient. In Arabidopsis thaliana (Mouse-ear cress), this protein is NAD(P)H-quinone oxidoreductase subunit O, chloroplastic.